The chain runs to 351 residues: MQQNALLQQLLADNDLSSAEMEACITAIMTGGFSDIAIAAILALLQKKGVKATELSGAYRAMMTHAIPIELDEHAVDTCGTGGDHAGTFNVSTVAAIIANGAGVSIAKHGNRSVTSRCGSADVLEALGYTIDLSPEATMELFSKTRFAFLFAPLYHPSMKAVAHIRRELGIRTIFNTLGPLANPACVKRQVIGVYDPSIMELYIETLMKTGCRHAMVVHGKTESGAPLDESSVCGITHISELHEGVVSYHSVIPEEFGLSRWKTADLKGGDREDNAMIIRRILDGSASQAQIDASIYAAAMACYVSGKATCIDEGLCLCKESLENGDAAKNFSRILDLNREIADKHRTAVN.

Residues Gly-80, Gly-83–Asp-84, Thr-88, Asn-90–Thr-93, Lys-108–Ser-116, and Ser-120 each bind 5-phospho-alpha-D-ribose 1-diphosphate. Gly-80 provides a ligand contact to anthranilate. Ser-92 contributes to the Mg(2+) binding site. Anthranilate is bound at residue Asn-111. Arg-166 serves as a coordination point for anthranilate. 2 residues coordinate Mg(2+): Asp-229 and Glu-230.

It belongs to the anthranilate phosphoribosyltransferase family. Homodimer. Requires Mg(2+) as cofactor.

It carries out the reaction N-(5-phospho-beta-D-ribosyl)anthranilate + diphosphate = 5-phospho-alpha-D-ribose 1-diphosphate + anthranilate. The protein operates within amino-acid biosynthesis; L-tryptophan biosynthesis; L-tryptophan from chorismate: step 2/5. Its function is as follows. Catalyzes the transfer of the phosphoribosyl group of 5-phosphorylribose-1-pyrophosphate (PRPP) to anthranilate to yield N-(5'-phosphoribosyl)-anthranilate (PRA). The polypeptide is Anthranilate phosphoribosyltransferase (Prosthecochloris aestuarii (strain DSM 271 / SK 413)).